The primary structure comprises 626 residues: Protein ALEX (626 aa).

Disordered stretches follow at residues 1-29, 173-223, 236-473, and 556-612; these read MMAR…LEPM, TTAH…AAHP, AAPG…APRS, and AASV…NNSR. Polar residues-rich tracts occupy residues 186–195 and 255–270; these read KSTAAASSRQ and GSTT…QSRL. Residues 281–312 are compositionally biased toward basic and acidic residues; sequence QIRESEQRDPQLRRKQQRWKEPLMPRREEKYP. Over residues 337–346 the composition is skewed to low complexity; sequence QPILTPGQPQ. The segment covering 366–399 has biased composition (pro residues); sequence IPTPGQPLPPQPIPTPGRPLTPQPIPTPGRPLTP. A compositionally biased stretch (low complexity) spans 416 to 435; the sequence is RLLRPGQPMSPQLRQTQGLP. Pro residues predominate over residues 436–445; the sequence is LPQPLLPPGQ. Over residues 570–579 the composition is skewed to basic residues; the sequence is ALSRSRRYPW. The segment covering 600–611 has biased composition (polar residues); sequence RRNAVSSSTNNS.

It belongs to the ALEX family. As to quaternary structure, interacts with the N-terminal region of the XLas isoforms of guanine nucleotide-binding protein G(s) subunit alpha.

Its subcellular location is the cell membrane. The protein localises to the cell projection. It localises to the ruffle. In terms of biological role, may inhibit the adenylyl cyclase-stimulating activity of guanine nucleotide-binding protein G(s) subunit alpha which is produced from the same locus in a different open reading frame. In Homo sapiens (Human), this protein is Protein ALEX.